The chain runs to 582 residues: Arginine--tRNA ligase (582 aa).

Positions 127 to 137 (PNLAKEMHVGH) match the 'HIGH' region motif.

This sequence belongs to the class-I aminoacyl-tRNA synthetase family. In terms of assembly, monomer.

Its subcellular location is the cytoplasm. The catalysed reaction is tRNA(Arg) + L-arginine + ATP = L-arginyl-tRNA(Arg) + AMP + diphosphate. This is Arginine--tRNA ligase from Psychromonas ingrahamii (strain DSM 17664 / CCUG 51855 / 37).